A 161-amino-acid chain; its full sequence is MQDAITSVINSSDVQGKYLDRSAIQKLKAYFATGELRVRAATTISANAANIVKEAVAKSLLYSDITRPGGNMYTTRRYAACIRDLDYYLRYATYAMLAGDPSILDERVLNGLKETYNSLGVPIGATVQAIQAMKEVTAGLVGADAGKEMGIYFDYICSGLS.

Residue asparagine 71 is modified to N4-methylasparagine. Cysteine 81 is a binding site for (2R,3E)-phycocyanobilin.

The protein belongs to the phycobiliprotein family. In terms of assembly, heterodimer of an alpha and a beta chain. Post-translationally, contains one covalently linked phycocyanobilin chromophore.

It localises to the cellular thylakoid membrane. Its function is as follows. Light-harvesting photosynthetic bile pigment-protein from the phycobiliprotein complex. Allophycocyanin has a maximum absorption at approximately 650 nanometers. In Arthrospira platensis (Spirulina platensis), this protein is Allophycocyanin beta chain (apcB).